Reading from the N-terminus, the 175-residue chain is Replication restart protein PriC (175 aa).

Belongs to the PriC family. As to quaternary structure, monomer. Oligomerizes in the absence of DNA. Component of the replication restart primosome, which is composed of PriA, PriB, PriC, DnaB and DnaT; DnaG primase associates transiently with this complex. Interacts with the C-terminus of SSB; this interaction is required for DnaB loading onto substrate replication forks. Interacts with DnaB alone and in the DnaB-DnaC complex, probably 1:1 binding with DnaB.

Functionally, involved in the restart of stalled replication forks, which reloads the replicative helicase (DnaB) on sites other than the origin of replication. Recognizes abandoned replication forks and remodels DNA single-stranded binding protein (SSB) on ssDNA to uncover a loading site for DnaB. There are several restart pathways, the PriA-PriC pathway is a minor restart pathway. Also part of the minor PriC-Rep pathway for restart of stalled replication forks, which has a different substrate specificity than PriA. priB and priC have redundant roles in the cell. Stimulates the 3'-5' helicase activity of Rep helicase in vitro. In vitro can load the DnaB replicative helicase from a DnaB-DnaC complex on an SSB-coated stalled replication fork with no leading- or lagging-strand (or with a gap between the leading strand and fork junction) in the absence of other primosome proteins (PriA, PriB or DnaT). Also part of the major restart pathway with PriA, PriB, DnaB, DnaT and DnaG primase. PriC may contribute to the stability of the preprimosome complex. Preferentially binds approximately 7-9 nucleotides of single-stranded (ss)DNA, also binds double-stranded (ds)DNA. PriB is probably more important in the cell than PriC. This is Replication restart protein PriC from Escherichia coli (strain K12).